Reading from the N-terminus, the 150-residue chain is NADH-quinone oxidoreductase subunit A (150 aa).

3 consecutive transmembrane segments (helical) span residues 14–34 (WAFA…LLGA), 70–90 (LVAM…AWAV), and 98–118 (LGFI…FYLV).

It belongs to the complex I subunit 3 family. In terms of assembly, NDH-1 is composed of 13 different subunits. Subunits NuoA, H, J, K, L, M, N constitute the membrane sector of the complex.

It localises to the cell inner membrane. The catalysed reaction is a quinone + NADH + 5 H(+)(in) = a quinol + NAD(+) + 4 H(+)(out). Functionally, NDH-1 shuttles electrons from NADH, via FMN and iron-sulfur (Fe-S) centers, to quinones in the respiratory chain. The immediate electron acceptor for the enzyme in this species is believed to be ubiquinone. Couples the redox reaction to proton translocation (for every two electrons transferred, four hydrogen ions are translocated across the cytoplasmic membrane), and thus conserves the redox energy in a proton gradient. The protein is NADH-quinone oxidoreductase subunit A of Proteus mirabilis (strain HI4320).